The sequence spans 1059 residues: Protein OPAQUE10 (1059 aa).

A run of 7 repeats spans residues 269–342 (SLLE…KESC), 343–416 (SLLE…KESC), 417–490 (SPLE…KESC), 491–564 (SPLE…KESC), 565–638 (FPLE…KESC), 639–712 (SPLE…KESC), and 713–786 (SPLE…KESC). The tract at residues 269 to 786 (SLLEPEDSVN…SRPIHDKESC (518 aa)) is 7 X approximate repeats. The segment at 511–534 (FNDAPNKESEGYGESGRGKHGEKS) is disordered. Basic and acidic residues predominate over residues 515-534 (PNKESEGYGESGRGKHGEKS). 3 disordered regions span residues 732 to 756 (QYSDGPNEGNEGYGESGHYKHEEKS), 856 to 875 (ETLADHPKKEEAGLQKDTGT), and 889 to 998 (SVCS…SGKG). Residues 858–869 (LADHPKKEEAGL) are compositionally biased toward basic and acidic residues. Polar residues-rich tracts occupy residues 907-924 (DFSSESHSRLTPTHNTGG) and 945-958 (ASDSTNPELNPEAS). Residues 984-994 (TRGRPEGDAPR) show a composition bias toward basic and acidic residues. The chain crosses the membrane as a helical span at residues 1003–1023 (VAGGITLVGAVFFMFHLSAAL).

Homodimer. Interacts (via N-terminus) with FL1 (via C-terminus), HIP, 19 kDa alpha-zein (AC P06677), 22 kDa alpha-zein (AC O48966), 16 kDa gamma-zein (AC P08031) and 50 kDa gamma-zein (AC C0P381). Expressed in kernels.

It is found in the endoplasmic reticulum membrane. Cereal endosperm protein required for the ring-shaped distribution of 22 kDa alpha- and 16 kDa gamma-zeins in protein bodies. The chain is Protein OPAQUE10 from Zea mays (Maize).